Reading from the N-terminus, the 130-residue chain is Small ribosomal subunit protein uS9 (130 aa).

The tract at residues 110–130 (AKERKKYGRKGARARFQFSKR) is disordered. Positions 111–130 (KERKKYGRKGARARFQFSKR) are enriched in basic residues.

Belongs to the universal ribosomal protein uS9 family.

The polypeptide is Small ribosomal subunit protein uS9 (Syntrophotalea carbinolica (strain DSM 2380 / NBRC 103641 / GraBd1) (Pelobacter carbinolicus)).